The chain runs to 576 residues: MTKYERDPELVNFLSKVEDLNSKRYSNIPSSKPAGEALSPVRSHNSGEYRRADMMTGKNVEGCDNLAYRSAYNYEMTFSPKKTHYSLSELNLERITPRPDLEGSASQKEKKFLISEEDYLLLQKLKASQTYNDSNADKNLPSFEKGPRMPSRGRPRPREKEIITIQYDFELPGRADIPSSSSSSSPPPLPTRRDHIKITDGNEEKPLLPTRPNKAEVTESPSSRSIKPDAVVPERVKPAPPVSRSTKPASFLSSLEDNKLTKAKSYNSEMETPKTTVKSSHIDYLDSIQLKPTTLSPTMKNKPKPTPPSPPAKRIPRSESFIKSMLNSNLTTTSKPSLPEKPQKLRNANLAAHKTKPSIPPKKVELNIVLPELRPVETSPTKQNFENSIDLPKLRSSNRNIKKEEEDSIPEAIKGIQNLKKTKQQKPAIPQKKSFLTNNSKNTTLKNGDDINKLNDEIEALSLRNNLKKRPPTAPQRKISLPEALRKVELMKKSKTEPVLESSNELSINAKLDAIIASRNLRASNTLPELSGVNTNIATSDKYTTSRDETVKETKPLVHPNKNRTRGPRRKLPTRV.

Residues R24–R50 are disordered. A phosphoserine mark is found at S46, S79, and S88. Disordered regions lie at residues N132–K160 and G173–P316. A Phosphoserine modification is found at S185. Basic and acidic residues predominate over residues T191–P206. S220 carries the post-translational modification Phosphoserine. Composition is skewed to polar residues over residues S243 to L255 and K264 to S279. Positions K304–K313 are enriched in pro residues. Residues S309 and S320 each carry the phosphoserine modification. An interaction with F-actin region spans residues S408–R470. The tract at residues D541–V576 is disordered. A compositionally biased stretch (basic and acidic residues) spans T544–P556. An interaction with the F-actin capping complex region spans residues R547–V576. A compositionally biased stretch (basic residues) spans N561–V576.

In terms of assembly, interacts (via C-terminus) with the CAP1-CAP2 F-actin capping protein complex. Interacts with INP52 (via SAC domain); the interaction is direct. Interacts with INP53 (via SAC domain); the interaction is direct. Interacts with RVS167. Interacts with SLA1. Post-translationally, phosphorylated by CDC28.

It is found in the cytoplasm. The protein localises to the cytoskeleton. Its subcellular location is the actin patch. It localises to the cell membrane. Recruits the capping protein complex to actin patches and the actomyosin contractile ring, and/or stabilizes their interaction. May serve as an adapter to link INP52 and INP53 to the cortical actin cytoskeleton. Binds F-actin. The sequence is that of F-actin capping regulator BSP1 (BSP1) from Saccharomyces cerevisiae (strain ATCC 204508 / S288c) (Baker's yeast).